Here is a 332-residue protein sequence, read N- to C-terminus: Ferredoxin--NADP reductase (332 aa).

Residues Glu35, Gln43, Tyr48, Val88, Phe122, Asp286, and Ser326 each coordinate FAD.

This sequence belongs to the ferredoxin--NADP reductase type 2 family. As to quaternary structure, homodimer. The cofactor is FAD.

It catalyses the reaction 2 reduced [2Fe-2S]-[ferredoxin] + NADP(+) + H(+) = 2 oxidized [2Fe-2S]-[ferredoxin] + NADPH. The sequence is that of Ferredoxin--NADP reductase from Limosilactobacillus reuteri (strain DSM 20016) (Lactobacillus reuteri).